The following is a 414-amino-acid chain: MATLTTTQTSPSLLGGVVIIGGTIIGAGMFSLPVVMSGAWFFWSMAALIFTWFCMLHSGLMILEANLNYRIGSSFDTITKDLLGKGWNVVNGISIAFVLYILTYAYISASGSILHHTFAEMSLNVPARAAGFGFALLVAFVVWLSTKAVSRMTAIVLGAKVITFFLTFGSLLGHVQPATLFNVAESNASYAPYLLMTLPFCLASFGYHGNVPSLMKYYGKDPKTIVKCLVYGTLMALALYTIWLLATMGNIPRPEFIGIAEKGGNIDVLVQALSGVLNSRSLDLLLVVFSNFAVASSFLGVTLGLFDYLADLFGFDDSAVGRLKTALLTFAPPVVGGLLFPNGFLYAIGYAGLAATIWAAIVPALLARASRKRFGSPKFRVWGGKPMIALILVFGVGNALVHILSSFNLLPVYQ.

The Cytoplasmic segment spans residues 1–15 (MATLTTTQTSPSLLG). The chain crosses the membrane as a helical span at residues 16–36 (GVVIIGGTIIGAGMFSLPVVM). Over 37-41 (SGAWF) the chain is Periplasmic. A helical membrane pass occupies residues 42–62 (FWSMAALIFTWFCMLHSGLMI). The Cytoplasmic segment spans residues 63–88 (LEANLNYRIGSSFDTITKDLLGKGWN). Residues 89–109 (VVNGISIAFVLYILTYAYISA) traverse the membrane as a helical segment. Over 110-128 (SGSILHHTFAEMSLNVPAR) the chain is Periplasmic. A helical membrane pass occupies residues 129 to 149 (AAGFGFALLVAFVVWLSTKAV). Residues 150–151 (SR) are Cytoplasmic-facing. Residues 152-172 (MTAIVLGAKVITFFLTFGSLL) traverse the membrane as a helical segment. The Periplasmic portion of the chain corresponds to 173-193 (GHVQPATLFNVAESNASYAPY). Residues 194-214 (LLMTLPFCLASFGYHGNVPSL) traverse the membrane as a helical segment. The Cytoplasmic segment spans residues 215 to 228 (MKYYGKDPKTIVKC). The chain crosses the membrane as a helical span at residues 229 to 249 (LVYGTLMALALYTIWLLATMG). At 250 to 285 (NIPRPEFIGIAEKGGNIDVLVQALSGVLNSRSLDLL) the chain is on the periplasmic side. A helical membrane pass occupies residues 286 to 306 (LVVFSNFAVASSFLGVTLGLF). The Cytoplasmic segment spans residues 307-325 (DYLADLFGFDDSAVGRLKT). The next 2 helical transmembrane spans lie at 326–346 (ALLT…GFLY) and 347–367 (AIGY…ALLA). Over 368–386 (RASRKRFGSPKFRVWGGKP) the chain is Cytoplasmic. The chain crosses the membrane as a helical span at residues 387-407 (MIALILVFGVGNALVHILSSF). The Periplasmic portion of the chain corresponds to 408 to 414 (NLLPVYQ).

Belongs to the amino acid/polyamine transporter 2 family. Mtr/TnaB/TyrP permease subfamily.

The protein resides in the cell inner membrane. It catalyses the reaction L-tryptophan(in) + H(+)(in) = L-tryptophan(out) + H(+)(out). Involved in the transport of tryptophan into the cell. The chain is Tryptophan-specific transport protein (mtr) from Shigella flexneri.